Reading from the N-terminus, the 124-residue chain is Biogenesis of lysosome-related organelles complex 1 subunit CNL1 (124 aa).

The tract at residues 1 to 20 (MMSENITAVEPQENNDVEAD) is disordered. Residues 75-98 (IGMAKDLLQKCDDLEKHYDQLDAV) are a coiled coil.

This sequence belongs to the BLOC1S4 family. Component of the biogenesis of lysosome-related organelles complex-1 (BLOC-1).

The protein localises to the cytoplasm. Functionally, component of the biogenesis of lysosome-related organelles complex-1 (BLOC-1), a complex that is involved in endosomal cargo sorting. The sequence is that of Biogenesis of lysosome-related organelles complex 1 subunit CNL1 (CLN1) from Kluyveromyces lactis (strain ATCC 8585 / CBS 2359 / DSM 70799 / NBRC 1267 / NRRL Y-1140 / WM37) (Yeast).